The chain runs to 371 residues: Vasopressin V2 receptor (371 aa).

Residues 1–30 (MLMASTTSAVPGHPSLPSLPSNSSQERPLD) form a disordered region. Topologically, residues 1-38 (MLMASTTSAVPGHPSLPSLPSNSSQERPLDTRDPLLAR) are extracellular. The span at 15–24 (SLPSLPSNSS) shows a compositional bias: low complexity. An N-linked (GlcNAc...) asparagine glycan is attached at Asn-22. The chain crosses the membrane as a helical span at residues 39–63 (AELALLSIVFVAVALSNGLVLAALA). The Cytoplasmic segment spans residues 64–77 (RRGRRGHWAPIHVF). The helical transmembrane segment at 78 to 98 (IGHLCLADLAVALFQVLPQLA) threads the bilayer. Over 99 to 113 (WKATDRFRGPDALCR) the chain is Extracellular. The chain crosses the membrane as a helical span at residues 114 to 135 (AVKYLQMVGMYASSYMILAMTL). Over 136–159 (DRHRAICRPMLAYRHGSGAHWNRP) the chain is Cytoplasmic. A helical membrane pass occupies residues 160-180 (VLVAWAFSLLLSLPQLFIFAQ). Over 181–200 (RNVEGGSGVTDCWACFAEPW) the chain is Extracellular. A helical membrane pass occupies residues 201-220 (GRRTYVTWIALMVFVAPTLG). Residues 221-271 (IAACQVLIFREIHASLVPGPSERPGGRRRGRRTGSPGEGAHVSAAVAKTVR) lie on the Cytoplasmic side of the membrane. Residues 240–259 (PSERPGGRRRGRRTGSPGEG) form a disordered region. Residues 272–293 (MTLVIVVVYVLCWAPFFLVQLW) form a helical membrane-spanning segment. Topologically, residues 294–308 (AAWDPEAPLEGAPFV) are extracellular. A helical membrane pass occupies residues 309–328 (LLMLLASLNSCTNPWIYASF). Residues 329–371 (SSSVSSELRSLLCCARGRTPPSLGPQDESCTTASSSLAKDTSS) are Cytoplasmic-facing. 2 S-palmitoyl cysteine lipidation sites follow: Cys-341 and Cys-342. Residues 349 to 371 (PSLGPQDESCTTASSSLAKDTSS) form a disordered region. Polar residues predominate over residues 356-371 (ESCTTASSSLAKDTSS).

The protein belongs to the G-protein coupled receptor 1 family. Vasopressin/oxytocin receptor subfamily. In terms of assembly, interacts with ARRDC4. Identified in a complex containing at least ARRDC4, V2R and HGS. Interacts with TMEM147. Kidney.

It is found in the cell membrane. In terms of biological role, receptor for arginine vasopressin. The activity of this receptor is mediated by G proteins which activate adenylate cyclase. Involved in renal water reabsorption. This chain is Vasopressin V2 receptor (AVPR2), found in Homo sapiens (Human).